Here is a 178-residue protein sequence, read N- to C-terminus: Large ribosomal subunit protein uL6 (178 aa).

Belongs to the universal ribosomal protein uL6 family. As to quaternary structure, part of the 50S ribosomal subunit.

In terms of biological role, this protein binds to the 23S rRNA, and is important in its secondary structure. It is located near the subunit interface in the base of the L7/L12 stalk, and near the tRNA binding site of the peptidyltransferase center. The protein is Large ribosomal subunit protein uL6 of Lactiplantibacillus plantarum (strain ATCC BAA-793 / NCIMB 8826 / WCFS1) (Lactobacillus plantarum).